A 94-amino-acid polypeptide reads, in one-letter code: CRISPR-associated endoribonuclease Cas2 1 (94 aa).

Asp8 is a Mg(2+) binding site.

It belongs to the CRISPR-associated endoribonuclease Cas2 protein family. Homodimer, forms a heterotetramer with a Cas1 homodimer. It depends on Mg(2+) as a cofactor.

Its function is as follows. CRISPR (clustered regularly interspaced short palindromic repeat), is an adaptive immune system that provides protection against mobile genetic elements (viruses, transposable elements and conjugative plasmids). CRISPR clusters contain sequences complementary to antecedent mobile elements and target invading nucleic acids. CRISPR clusters are transcribed and processed into CRISPR RNA (crRNA). Involved in the integration of spacer DNA into the CRISPR cassette. Functions as a ssRNA-specific endoribonuclease. In Archaeoglobus fulgidus (strain ATCC 49558 / DSM 4304 / JCM 9628 / NBRC 100126 / VC-16), this protein is CRISPR-associated endoribonuclease Cas2 1 (cas21).